Here is a 386-residue protein sequence, read N- to C-terminus: S-adenosylmethionine synthase (386 aa).

Residue His16 coordinates ATP. Asp18 is a binding site for Mg(2+). Glu44 provides a ligand contact to K(+). Glu57 and Gln100 together coordinate L-methionine. The tract at residues 100-110 (QSPDINQGVDR) is flexible loop. ATP contacts are provided by residues 164-166 (DGK), 230-231 (KF), Asp239, 245-246 (RK), Ala262, and Lys266. Asp239 is a binding site for L-methionine. Lys270 is an L-methionine binding site.

It belongs to the AdoMet synthase family. In terms of assembly, homotetramer; dimer of dimers. The cofactor is Mg(2+). Requires K(+) as cofactor.

It is found in the cytoplasm. The catalysed reaction is L-methionine + ATP + H2O = S-adenosyl-L-methionine + phosphate + diphosphate. It participates in amino-acid biosynthesis; S-adenosyl-L-methionine biosynthesis; S-adenosyl-L-methionine from L-methionine: step 1/1. In terms of biological role, catalyzes the formation of S-adenosylmethionine (AdoMet) from methionine and ATP. The overall synthetic reaction is composed of two sequential steps, AdoMet formation and the subsequent tripolyphosphate hydrolysis which occurs prior to release of AdoMet from the enzyme. This chain is S-adenosylmethionine synthase, found in Helicobacter hepaticus (strain ATCC 51449 / 3B1).